The primary structure comprises 224 residues: Ribulose-phosphate 3-epimerase (224 aa).

Residue Ser-8 participates in substrate binding. His-31, Asp-33, and His-64 together coordinate a divalent metal cation. Residue Asp-33 is the Proton acceptor of the active site. Substrate-binding positions include His-64, 140–143 (GFGG), 173–175 (DGG), and 195–196 (GS). Asp-173 provides a ligand contact to a divalent metal cation. The Proton donor role is filled by Asp-173.

Belongs to the ribulose-phosphate 3-epimerase family. A divalent metal cation is required as a cofactor.

It catalyses the reaction D-ribulose 5-phosphate = D-xylulose 5-phosphate. Its pathway is carbohydrate degradation. Functionally, catalyzes the reversible epimerization of D-ribulose 5-phosphate to D-xylulose 5-phosphate. In Mycobacterium leprae (strain TN), this protein is Ribulose-phosphate 3-epimerase.